The sequence spans 715 residues: ATP-dependent RecD2 DNA helicase (715 aa).

A not required for helicase activity region spans residues 1 to 150 (MSAALPAEPF…STLHKMVSSW (150 aa)). Residues Gln343 and 363 to 367 (GTGKS) each bind ATP. DNA-binding regions lie at residues Gly391 and 407–414 (TVHRLLGY). Gln466 serves as a coordination point for ATP. A DNA-binding region is located at residue Val470. ATP is bound at residue Arg493. DNA-binding regions lie at residues 554–555 (RK), 596–604 (NDYNNEIFN), and 644–647 (TVHR). Arg679 is a binding site for ATP.

The protein belongs to the RecD family. RecD2 subfamily. In terms of assembly, monomer; homodimers seem to be inactive.

The catalysed reaction is Couples ATP hydrolysis with the unwinding of duplex DNA at the replication fork by translocating in the 5'-3' direction. This creates two antiparallel DNA single strands (ssDNA). The leading ssDNA polymer is the template for DNA polymerase III holoenzyme which synthesizes a continuous strand.. The enzyme catalyses ATP + H2O = ADP + phosphate + H(+). Its function is as follows. DNA-dependent ATPase (ssDNA stimulates the ATPase better than dsDNA) and ATP-dependent 5'-3' DNA helicase. Plays a role in an antioxidant pathway. Involved in DNA damage repair and/or recombination. Appears to move along DNA in single base steps, powered by hydrolysis of 1 molecule of ATP. Has low processivity, unwinds about 15-20 base pairs/second. Short (20 bp) substrates with 5'-overhangs or forked ends are the best substrates, is much less efficient on 52 or 76 bp substrates with 5'-overhangs. The presence of single-stranded DNA-binding protein (SSB) increases unwinding 4-5 fold. Has no activity on blunt DNA or DNA with 3'-overhangs. Requires at least 10 bases of 5'-ssDNA for helicase activity. The chain is ATP-dependent RecD2 DNA helicase from Deinococcus radiodurans (strain ATCC 13939 / DSM 20539 / JCM 16871 / CCUG 27074 / LMG 4051 / NBRC 15346 / NCIMB 9279 / VKM B-1422 / R1).